The primary structure comprises 362 residues: MIIDRVEVETINSFWKLELLKEVYGLISILPILTLLLGITIEVLVIVWLEREISASIQQRIGPEYAGPLGLLQAIADGTKLLFKEDILPSRGDISLFSIGPSIAVISVLLSFLVIPLGYHFVLADLSIGVFLWIAISSIAPIGLLMAGYSSNNKYSFLGGLRAAAQSISYEIPLTFCVLAISLLSNSLSTVDIVEAQSKYGFFGWNIWRQPIGFLVFLISSLAECERLPFDLPEAEEELVAGYQTEYSGIKYGLFYLVSYLNLLVSSLFVTVLYLGGWNLSIPYISFFDFFQMNKAVGILEMTMGIFITLTKAYLFLFISITIRWTLPRMRMDQLLNLGWKFLLPISLGNLLLTTSFQLVSL.

A run of 8 helical transmembrane segments spans residues 29–49 (ILPILTLLLGITIEVLVIVWL), 103–123 (IAVISVLLSFLVIPLGYHFVL), 128–148 (IGVFLWIAISSIAPIGLLMAG), 164–184 (AAQSISYEIPLTFCVLAISLL), 202–222 (FFGWNIWRQPIGFLVFLISSL), 247–267 (YSGIKYGLFYLVSYLNLLVSS), 303–323 (TMGIFITLTKAYLFLFISITI), and 335–355 (LLNLGWKFLLPISLGNLLLTT).

Belongs to the complex I subunit 1 family. In terms of assembly, NDH is composed of at least 16 different subunits, 5 of which are encoded in the nucleus.

The protein localises to the plastid. It is found in the chloroplast thylakoid membrane. It catalyses the reaction a plastoquinone + NADH + (n+1) H(+)(in) = a plastoquinol + NAD(+) + n H(+)(out). It carries out the reaction a plastoquinone + NADPH + (n+1) H(+)(in) = a plastoquinol + NADP(+) + n H(+)(out). Functionally, NDH shuttles electrons from NAD(P)H:plastoquinone, via FMN and iron-sulfur (Fe-S) centers, to quinones in the photosynthetic chain and possibly in a chloroplast respiratory chain. The immediate electron acceptor for the enzyme in this species is believed to be plastoquinone. Couples the redox reaction to proton translocation, and thus conserves the redox energy in a proton gradient. This Triticum aestivum (Wheat) protein is NAD(P)H-quinone oxidoreductase subunit 1, chloroplastic.